We begin with the raw amino-acid sequence, 257 residues long: Ribosomal RNA small subunit methyltransferase J (257 aa).

S-adenosyl-L-methionine-binding positions include 107–108 (RD), 123–124 (ER), and aspartate 177.

The protein belongs to the methyltransferase superfamily. RsmJ family.

It localises to the cytoplasm. The catalysed reaction is guanosine(1516) in 16S rRNA + S-adenosyl-L-methionine = N(2)-methylguanosine(1516) in 16S rRNA + S-adenosyl-L-homocysteine + H(+). Functionally, specifically methylates the guanosine in position 1516 of 16S rRNA. The sequence is that of Ribosomal RNA small subunit methyltransferase J from Haemophilus influenzae (strain PittEE).